We begin with the raw amino-acid sequence, 330 residues long: MYPEYQNIFTQVQVRGTPEMGMDDAGNNMMEERVGKPFFSTLAGLFGNGQIGPYYFGWTSIVAFGTGIAWFVIVGFNMLAQVGWSIPQFIRQLFWLALEPPSPEYGLSMPPLNDGGWYIIASFFLLVSVMTWLLRAYLLAEQHKMGKHIFWGFAAAVWLFLVLGLFRPILMGSWSEAVPYGIFPHLDWTTAFSIRYGNLYYNPFHCLSIVFLYGSVLLFCMHGGTILAVTRYGGDRELEQIYDRGTATERAALFWRWTMGFNATMEGIHRWAWWFAVLTPITGGIGILLTGTVVDNWFIWAQEHHFAPMYDGSYGYEDYGSYEAFIGKEN.

Transmembrane regions (helical) follow at residues G57–G83, G115–K144, and K147–G172. Residues H185 and H205 each coordinate (7R,8Z)-bacteriochlorophyll b. Residues N202 to T230 form a helical membrane-spanning segment. Residues H222 and E237 each coordinate Fe cation. A ubiquinone is bound at residue W255. Residues T264–T290 form a helical membrane-spanning segment. Residue H269 coordinates Fe cation.

The protein belongs to the reaction center PufL/M/PsbA/D family. As to quaternary structure, reaction center is composed of four bacteriochlorophylls, two bacteriopheophytins, two ubiquinones, one iron, and two highly hydrophobic polypeptide chains (designated L and M).

The protein resides in the cellular chromatophore membrane. In terms of biological role, the reaction center is a membrane-bound complex that mediates the initial photochemical event in the electron transfer process of photosynthesis. The sequence is that of Reaction center protein M chain (pufM) from Roseobacter denitrificans (strain ATCC 33942 / OCh 114) (Erythrobacter sp. (strain OCh 114)).